Here is a 303-residue protein sequence, read N- to C-terminus: Bifunctional protein FolD (303 aa).

NADP(+)-binding positions include 175-177 and I243; that span reads GVS.

It belongs to the tetrahydrofolate dehydrogenase/cyclohydrolase family. Homodimer.

The catalysed reaction is (6R)-5,10-methylene-5,6,7,8-tetrahydrofolate + NADP(+) = (6R)-5,10-methenyltetrahydrofolate + NADPH. The enzyme catalyses (6R)-5,10-methenyltetrahydrofolate + H2O = (6R)-10-formyltetrahydrofolate + H(+). Its pathway is one-carbon metabolism; tetrahydrofolate interconversion. Functionally, catalyzes the oxidation of 5,10-methylenetetrahydrofolate to 5,10-methenyltetrahydrofolate and then the hydrolysis of 5,10-methenyltetrahydrofolate to 10-formyltetrahydrofolate. The chain is Bifunctional protein FolD from Xanthomonas axonopodis pv. citri (strain 306).